Consider the following 102-residue polypeptide: Putative septation protein SpoVG 1 (102 aa).

The protein belongs to the SpoVG family.

Its function is as follows. Could be involved in septation. The protein is Putative septation protein SpoVG 1 of Listeria innocua serovar 6a (strain ATCC BAA-680 / CLIP 11262).